The following is a 137-amino-acid chain: Large ribosomal subunit protein uL16 (137 aa).

Basic residues predominate over residues 1 to 14 (MLQPNRRKFRKEHK). The segment at 1 to 22 (MLQPNRRKFRKEHKGRNEGLAT) is disordered.

This sequence belongs to the universal ribosomal protein uL16 family. As to quaternary structure, part of the 50S ribosomal subunit.

Binds 23S rRNA and is also seen to make contacts with the A and possibly P site tRNAs. The polypeptide is Large ribosomal subunit protein uL16 (Dechloromonas aromatica (strain RCB)).